We begin with the raw amino-acid sequence, 311 residues long: Acetaldehyde dehydrogenase (311 aa).

Cysteine 131 serves as the catalytic Acyl-thioester intermediate. NAD(+) contacts are provided by residues 162–170 (SVGPGTRKN) and asparagine 273.

The protein belongs to the acetaldehyde dehydrogenase family.

It carries out the reaction acetaldehyde + NAD(+) + CoA = acetyl-CoA + NADH + H(+). This is Acetaldehyde dehydrogenase from Ralstonia pickettii (strain 12J).